A 544-amino-acid chain; its full sequence is uncharacterized protein (544 aa).

This is an uncharacterized protein from Acanthamoeba polyphaga mimivirus (APMV).